The sequence spans 546 residues: Intermembrane transport protein PqiB (546 aa).

The Cytoplasmic portion of the chain corresponds to 1–15 (MESNNGEAKIQKVKN). Residues 16–36 (WSPVWIFPIVTALIGAWVLFY) form a helical membrane-spanning segment. Residues 37–546 (HYSHQGPEVT…KDPEPKRAKQ (510 aa)) lie on the Periplasmic side of the membrane. MCE/MlaD stretches follow at residues 42–133 (GPEV…LQPG), 158–217 (IRVI…NNVR), and 285–389 (HIDY…LDFY). Residues 437 to 464 (IEQATSTLSESQRTMKNLQTTLDSMNKI) adopt a coiled-coil conformation.

This sequence belongs to the PqiB family. As to quaternary structure, homohexamer. May form a complex composed of PqiA, PqiB and PqiC. Interacts with PqiC.

It localises to the cell inner membrane. Functionally, forms a tunnel that spans the entire periplasmic space. Could be implicated in lipid transport between the inner membrane and the outer membrane. Binds phospholipids. Required for outer membrane homeostasis. Contributes to membrane integrity. The polypeptide is Intermembrane transport protein PqiB (Escherichia coli (strain K12)).